The chain runs to 267 residues: 4-hydroxy-tetrahydrodipicolinate reductase (267 aa).

Residue 8 to 13 participates in NAD(+) binding; sequence GAAGRM. Residue arginine 35 participates in NADP(+) binding. NAD(+)-binding positions include 98 to 100 and 122 to 125; these read GTT and AANF. Histidine 155 serves as the catalytic Proton donor/acceptor. Histidine 156 contacts (S)-2,3,4,5-tetrahydrodipicolinate. Lysine 159 (proton donor) is an active-site residue. 165-166 contacts (S)-2,3,4,5-tetrahydrodipicolinate; it reads GT.

Belongs to the DapB family.

It localises to the cytoplasm. It carries out the reaction (S)-2,3,4,5-tetrahydrodipicolinate + NAD(+) + H2O = (2S,4S)-4-hydroxy-2,3,4,5-tetrahydrodipicolinate + NADH + H(+). It catalyses the reaction (S)-2,3,4,5-tetrahydrodipicolinate + NADP(+) + H2O = (2S,4S)-4-hydroxy-2,3,4,5-tetrahydrodipicolinate + NADPH + H(+). The protein operates within amino-acid biosynthesis; L-lysine biosynthesis via DAP pathway; (S)-tetrahydrodipicolinate from L-aspartate: step 4/4. Catalyzes the conversion of 4-hydroxy-tetrahydrodipicolinate (HTPA) to tetrahydrodipicolinate. The protein is 4-hydroxy-tetrahydrodipicolinate reductase of Azotobacter vinelandii (strain DJ / ATCC BAA-1303).